The sequence spans 491 residues: AAA-ATPase At2g46620 (491 aa).

The chain crosses the membrane as a helical span at residues 1–21; it reads MGILWDSFLLLLVSTFALFLV. 238 to 245 contacts ATP; it reads GPSGTGKS. The disordered stretch occupies residues 423–460; it reads GTGRRLLLENGSRKSTSEDVSDDMSGSLCGGGGGSSPA.

The protein belongs to the AAA ATPase family. BCS1 subfamily. Mg(2+) is required as a cofactor.

It localises to the membrane. The enzyme catalyses ATP + H2O = ADP + phosphate + H(+). This Arabidopsis thaliana (Mouse-ear cress) protein is AAA-ATPase At2g46620.